Consider the following 508-residue polypeptide: Protein phosphatase PP2A regulatory subunit B (508 aa).

WD repeat units follow at residues T19–S58, E81–V122, A166–N204, E215–S255, E274–K312, and E329–D370. Residues D369–G466 are disordered. Residues D396 to V418 are compositionally biased toward acidic residues. Basic residues predominate over residues F447 to M461. Residues D477 to T507 form a WD 7 repeat.

This sequence belongs to the phosphatase 2A regulatory subunit B family. PP2A exists in several trimeric forms, all of which consist of a core composed of a catalytic subunit associated with a 65 kDa (PR65) (Subunit A) and a 55 kDa (PR55) (Subunit B) regulatory subunit.

Phosphatase 2A affects a variety of biological processes in the cell such as transcription, cell cycle progression and cellular morphogenesis, and provides an initial identification of critical substrates for this phosphatase. The regulatory subunit may direct the catalytic subunit to distinct, albeit overlapping, subsets of substrates. This Candida tropicalis (Yeast) protein is Protein phosphatase PP2A regulatory subunit B (CDC55).